Consider the following 519-residue polypeptide: Na(+)/H(+) exchange regulatory cofactor NHE-RF3 (519 aa).

Residues Glu-9–Asp-90 form the PDZ 1 domain. Phosphoserine occurs at positions 108, 148, 192, 250, 334, and 348. 2 PDZ domains span residues Arg-134–Glu-215 and Ile-243–Glu-323. Residues Gly-347 to His-374 form a disordered region. The segment covering Pro-357–Asp-367 has biased composition (polar residues). The 81-residue stretch at Leu-378–Lys-458 folds into the PDZ 4 domain. Thr-451 carries the post-translational modification Phosphothreonine. A disordered region spans residues Asp-479–Met-519. A compositionally biased stretch (basic and acidic residues) spans Pro-482–His-504. Residues Ser-492, Ser-508, Ser-510, Ser-511, Ser-512, and Ser-514 each carry the phosphoserine modification. Residues Ser-505–Met-519 show a composition bias toward low complexity.

The protein belongs to the NHER family. As to quaternary structure, interacts with PDZK1IP1 and ABCC2. Interacts (via PDZ domains 1 and 3) with SCARB1 (C-terminal domain). Forms a heterodimeric complex with NHERF1. Interacts with AKAP2, BCR, CFTR, SLC22A12, SLC22A4, SLC22A5, NHERF2 and SLC17A1. Component of a complex, composed of PDZK1, SYNGAP1, KLHL17 and NMDA receptors. Interacts (via PDZ1 domain) directly with KLHL17; the interaction is important for integrity of actin cytoskeleton structures in neurons. Interacts (via the first PDZ domain) with PTGIR (via non-isoprenylated C-terminus). Interacts (via C-terminal PDZ domain) with SLC26A6 (via C-terminal domain). Interacts (via C-terminal PDZ domain) with SLC9A3 (via C-terminal domain). Interacts (via PDZ domains 1 and 3) with SLC5A8 (via PDZ-binding motif); interaction increases nicotinate transport activity of SLC5A8. Expression is limited to epithelial cells. Expressed in the kidney (brush border of proximal tubule), pancreas, liver, and small intestine. Expressed at a lower level in the adrenal cortex, testis and stomach. Overexpressed in breast, renal and lung carcinomas.

Its subcellular location is the membrane. The protein resides in the cell membrane. Functionally, a scaffold protein that connects plasma membrane proteins and regulatory components, regulating their surface expression in epithelial cells apical domains. May be involved in the coordination of a diverse range of regulatory processes for ion transport and second messenger cascades. In complex with NHERF1, may cluster proteins that are functionally dependent in a mutual fashion and modulate the trafficking and the activity of the associated membrane proteins. May play a role in the cellular mechanisms associated with multidrug resistance through its interaction with ABCC2 and PDZK1IP1. May potentiate the CFTR chloride channel activity. Required for normal cell-surface expression of SCARB1. Plays a role in maintaining normal plasma cholesterol levels via its effects on SCARB1. Plays a role in the normal localization and function of the chloride-anion exchanger SLC26A6 to the plasma membrane in the brush border of the proximal tubule of the kidney. May be involved in the regulation of proximal tubular Na(+)-dependent inorganic phosphate cotransport therefore playing an important role in tubule function. This is Na(+)/H(+) exchange regulatory cofactor NHE-RF3 (PDZK1) from Homo sapiens (Human).